Consider the following 368-residue polypeptide: S-adenosylmethionine:tRNA ribosyltransferase-isomerase (368 aa).

This sequence belongs to the QueA family. In terms of assembly, monomer.

It localises to the cytoplasm. It carries out the reaction 7-aminomethyl-7-carbaguanosine(34) in tRNA + S-adenosyl-L-methionine = epoxyqueuosine(34) in tRNA + adenine + L-methionine + 2 H(+). It participates in tRNA modification; tRNA-queuosine biosynthesis. Transfers and isomerizes the ribose moiety from AdoMet to the 7-aminomethyl group of 7-deazaguanine (preQ1-tRNA) to give epoxyqueuosine (oQ-tRNA). This Methylorubrum extorquens (strain CM4 / NCIMB 13688) (Methylobacterium extorquens) protein is S-adenosylmethionine:tRNA ribosyltransferase-isomerase.